We begin with the raw amino-acid sequence, 847 residues long: B-cell receptor CD22 (847 aa).

The signal sequence occupies residues 1-19; that stretch reads MHLLGPWLLLLVLEYLAFS. Residues 20–138 enclose the Ig-like V-type domain; it reads DSSKWVFEHP…MERIHLNVSE (119 aa). Residues 20–687 are Extracellular-facing; that stretch reads DSSKWVFEHP…YYSPETIGRR (668 aa). Cystine bridges form between C39/C167, C44/C102, and C161/C219. 3 N-linked (GlcNAc...) asparagine glycosylation sites follow: N67, N101, and N112. R120 provides a ligand contact to N-acetylneuraminate. N135, N164, and N231 each carry an N-linked (GlcNAc...) asparagine glycan. Ig-like C2-type domains lie at 143 to 235, 242 to 326, 331 to 416, 419 to 500, 505 to 582, and 593 to 676; these read PHIQ…DTVQ, PKLE…VFLQ, PEPS…LDVQ, PKKV…VALN, PRDV…QTAS, and PRRL…STLT. Cystine bridges form between C265/C309, C353/C396, C442/C484, and C529/C571. 3 N-linked (GlcNAc...) asparagine glycosylation sites follow: N363, N445, and N479. N-linked (GlcNAc...) asparagine glycans are attached at residues N574 and N634. A disulfide bond links C616 and C659. A helical membrane pass occupies residues 688–706; sequence VAVGLGSCLAILILAICGL. Residues 707 to 847 are Cytoplasmic-facing; the sequence is KLQRRWKRTQ…ENVDYVILKH (141 aa). Phosphoserine is present on residues S725, S726, and S729. 2 short sequence motifs (ITIM motif) span residues 760–765 and 794–799; these read ISYTTL and VTYSAL. The residue at position 762 (Y762) is a Phosphotyrosine. Residues Y807, Y822, and Y842 each carry the phosphotyrosine modification. 2 consecutive short sequence motifs (ITIM motif) follow at residues 820–825 and 840–845; these read IHYSEL and VDYVIL.

It belongs to the immunoglobulin superfamily. SIGLEC (sialic acid binding Ig-like lectin) family. In terms of assembly, predominantly monomer of isoform CD22-beta. Also found as heterodimer of isoform CD22-beta and a shorter isoform. Interacts with PTPN6/SHP-1, LYN, SYK, PIK3R1/PIK3R2 and PLCG1 upon phosphorylation. Interacts with GRB2, INPP5D and SHC1 upon phosphorylation. May form a complex with INPP5D/SHIP, GRB2 and SHC1. In terms of processing, phosphorylation of Tyr-762, Tyr-807 and Tyr-822 are involved in binding to SYK, GRB2 and SYK, respectively. Phosphorylation of Tyr-842 is involved in binding to SYK, PLCG2 and PIK3R1/PIK3R2. Post-translationally, phosphorylated on tyrosine residues by LYN. As to expression, B-lymphocytes.

Its subcellular location is the cell membrane. In terms of biological role, most highly expressed siglec (sialic acid-binding immunoglobulin-like lectin) on B-cells that plays a role in various aspects of B-cell biology including differentiation, antigen presentation, and trafficking to bone marrow. Binds to alpha 2,6-linked sialic acid residues of surface molecules such as CD22 itself, CD45 and IgM in a cis configuration. Can also bind to ligands on other cells as an adhesion molecule in a trans configuration. Acts as an inhibitory coreceptor on the surface of B-cells and inhibits B-cell receptor induced signaling, characterized by inhibition of the calcium mobilization and cellular activation. Mechanistically, the immunoreceptor tyrosine-based inhibitory motif domain is phosphorylated by the Src kinase LYN, which in turn leads to the recruitment of the protein tyrosine phosphatase 1/PTPN6, leading to the negative regulation of BCR signaling. If this negative signaling from is of sufficient strength, apoptosis of the B-cell can be induced. The polypeptide is B-cell receptor CD22 (Homo sapiens (Human)).